A 381-amino-acid chain; its full sequence is Orotidine 5'-phosphate decarboxylase (381 aa).

Substrate is bound by residues Asp42, 64–66, 99–108, Tyr333, and Arg352; these read KTH and DRKFGDIGHT. The Proton donor role is filled by Lys101. Residues 311–333 are disordered; sequence LPPEDEDQQTNGSVGGDGQGQQY.

It belongs to the OMP decarboxylase family.

It catalyses the reaction orotidine 5'-phosphate + H(+) = UMP + CO2. It participates in pyrimidine metabolism; UMP biosynthesis via de novo pathway; UMP from orotate: step 2/2. The polypeptide is Orotidine 5'-phosphate decarboxylase (ura3) (Hypocrea jecorina (Trichoderma reesei)).